A 186-amino-acid chain; its full sequence is Elongation factor P (186 aa).

Belongs to the elongation factor P family.

The protein resides in the cytoplasm. The protein operates within protein biosynthesis; polypeptide chain elongation. Functionally, involved in peptide bond synthesis. Stimulates efficient translation and peptide-bond synthesis on native or reconstituted 70S ribosomes in vitro. Probably functions indirectly by altering the affinity of the ribosome for aminoacyl-tRNA, thus increasing their reactivity as acceptors for peptidyl transferase. The chain is Elongation factor P from Cupriavidus pinatubonensis (strain JMP 134 / LMG 1197) (Cupriavidus necator (strain JMP 134)).